The chain runs to 679 residues: Protein hook (679 aa).

Residues 6-123 (NEMYYSLLEW…RLLQLVLGCA (118 aa)) form the Calponin-homology (CH) domain. Coiled coils occupy residues 135–437 (EIMC…LKCG) and 480–574 (QTAL…QEIL).

This sequence belongs to the hook family. As to quaternary structure, homodimer. Interacts with microtubules via its N-terminus.

It localises to the cytoplasm. The protein localises to the cytoskeleton. The protein resides in the endosome. Its subcellular location is the synapse. Functionally, involved in endocytic trafficking by stabilizing organelles of the endocytic pathway. Probably acts as a cytoskeletal linker protein required to tether endosome vesicles to the cytoskeleton. Involved in modulation of endocytosis at stages required for down-regulation of membrane proteins that control synapse size. Not involved in synaptic vesicle recycling. Required in R7 cells for boss endocytosis into multivesicular bodies (MVBs). Has a role in regulating adult longevity. The protein is Protein hook of Drosophila sechellia (Fruit fly).